The chain runs to 275 residues: ATP synthase subunit a (275 aa).

The next 7 helical transmembrane spans lie at arginine 46 to methionine 66, phenylalanine 104 to isoleucine 124, isoleucine 135 to lysine 155, serine 166 to isoleucine 186, methionine 204 to valine 224, isoleucine 231 to isoleucine 251, and phenylalanine 252 to alanine 272.

It belongs to the ATPase A chain family. As to quaternary structure, F-type ATPases have 2 components, CF(1) - the catalytic core - and CF(0) - the membrane proton channel. CF(1) has five subunits: alpha(3), beta(3), gamma(1), delta(1), epsilon(1). CF(0) has three main subunits: a(1), b(2) and c(9-12). The alpha and beta chains form an alternating ring which encloses part of the gamma chain. CF(1) is attached to CF(0) by a central stalk formed by the gamma and epsilon chains, while a peripheral stalk is formed by the delta and b chains.

It is found in the cell membrane. Its function is as follows. Key component of the proton channel; it plays a direct role in the translocation of protons across the membrane. This chain is ATP synthase subunit a, found in Rhodococcus erythropolis (strain PR4 / NBRC 100887).